The sequence spans 635 residues: Peptidyl-prolyl cis-trans isomerase PASTICCINO1 (635 aa).

Polar residues predominate over residues 1–10 (MAVGDQTEQN). A disordered region spans residues 1 to 28 (MAVGDQTEQNYLPKKKKSETEDDKRRKK). PPIase FKBP-type domains lie at 51 to 147 (GDQV…LDFS), 175 to 260 (PYEV…VHFI), and 291 to 383 (DSRL…LGFE). TPR repeat units follow at residues 400–433 (ADKI…FNHV), 449–482 (NMLH…KPGH), and 483–516 (VKGL…DKSS). The segment at 530–546 (KEQEAESKARKQFKGLF) is calmodulin-binding. Residues 569-586 (EVDETKDNDDDETLEEEG) are compositionally biased toward acidic residues. The segment at 569–593 (EVDETKDNDDDETLEEEGATTVSTE) is disordered. Residues 609–629 (VMLQIGIQLGVVLIGILIFQF) traverse the membrane as a helical; Anchor for type IV membrane protein segment.

It belongs to the FKBP-type PPIase family. As to quaternary structure, interacts with calmodulin (CaM). Interacts with RPM1 and NAC089. Interacts with the elongase complex core members KCR1, PAS2 and CER10. In terms of tissue distribution, expressed ubiquitously.

It is found in the endoplasmic reticulum membrane. The protein localises to the cytoplasm. The protein resides in the nucleus. The enzyme catalyses [protein]-peptidylproline (omega=180) = [protein]-peptidylproline (omega=0). PPIases accelerate the folding of proteins. It catalyzes the cis-trans isomerization of proline imidic peptide bonds in oligopeptides. Essential protein regulating cell division, adhesion and elongation throughout the plant development and embryogenesis. Required for the spatial organization of apical meristems. Involved in the hormonal control of cell division and differentiation mediated by cytokinins and auxin. Regulates the function of NAC089 transcription factor by controlling its targeting to the nucleus upon plant cell division. Interacts with enzymes of the fatty acid elongase complex and favors the generation of very-long-chain fatty acids (VLCFAs) required for polar auxin transport and tissue patterning during plant development. The protein is Peptidyl-prolyl cis-trans isomerase PASTICCINO1 (PAS1) of Arabidopsis thaliana (Mouse-ear cress).